Here is an 890-residue protein sequence, read N- to C-terminus: MPDTARPSATTEPTPFMAQYLSIKAEHPGALLFFRMGDFYELFFQDAVEAASILDITLTSRGEHDGKPIPMAGVPYHAAEGYLARLIKGGCRVAVCEQMETPAEAKKRGSKSIVQRGVVRIVTPGTLTEDALLPARQGQALAAIAFSGAGEAALAVCDVSTGAFDLTAIPAARLGEALLAWPLSELVISADDADRPLILEARGFLSAPITERPGRAATAKSGEALLKEVFGLAALDSLGDFSRVEFAAAGLLLDYVKLTQAGAPIRLRAPRRPDTGGILLIDPATRASLEIDRSISGGRDGTLLAVIDRTVTAPGARLLAARLARPSRSVSEITSRYDAVSHLLGDAGQLEDVRVRLKSAPDLERAVMRLNLGRGGPRDMAALSKAVLSGAEAAGVLGRGLPPRLAEVAETLGLSGAPSVRAFAEDLARALTEAPPMLARDGGFIAQGWDVALDEVRALRDGSRRVIAELQAKYADQTGINALKVKFNNVLGYFIEVPAAKADPMLRAPLSADFIHRQTMAGAVRFSTHELADLAGRIGRAEDEAKAREIAIFEAFCAKVEELTGPLAVIAAALAELDVAASHAVWAAETGAVRPALDPRPVFEAKGLRHPVVEAALRKEGKGFTANDLHLDAEGNEGARFLLVTGPNMAGKSTYLRQSALAVILAQAGAFVPAASLRLGLSDRVFSRVGASDDLARGRSTFMVEMVETAAILNQATPESFVILDEVGRGTATWDGLAIAWAAAEHLHDTNRCRAIFATHYHELTDLAARMPAASNASLKAREWKQDLIFLHEVQPGPADRSYGVQVAKLAGLPRAAVARAGQILKKLEAGPSASENLPLFAMVAEDPAPEFSPESSAVIEALAAADPDSLTPREALDLVYRLKDLSRGA.

An ATP-binding site is contributed by 646 to 653 (GPNMAGKS).

This sequence belongs to the DNA mismatch repair MutS family.

Its function is as follows. This protein is involved in the repair of mismatches in DNA. It is possible that it carries out the mismatch recognition step. This protein has a weak ATPase activity. The chain is DNA mismatch repair protein MutS from Hyphomonas neptunium (strain ATCC 15444).